Here is a 361-residue protein sequence, read N- to C-terminus: Zinc transporter ZIP13 (361 aa).

Over 1–6 (MPGCPC) the chain is Lumenal. A helical membrane pass occupies residues 7–27 (PGCGMAGQRLLFLTVLALELL). The Cytoplasmic segment spans residues 28–68 (ERAGGSQPALRSLGAAAACRLDSKESESWGALLSGERLDTW). The helical transmembrane segment at 69-89 (ICSLLGSLMVGLSGVFPLLVI) threads the bilayer. The Lumenal segment spans residues 90–108 (PLEMGTMLQSEAGAWRLKQ). Residues 109–129 (LLSFALGGLLGNVFLHLLPEA) form a helical membrane-spanning segment. Residues 130–150 (WAYTCNISPGVEGQSLQRQQQ) are Cytoplasmic-facing. Residues 151-171 (LGLWVIAGFLTFLALEKMFLN) traverse the membrane as a helical segment. Residues 172-233 (CKEEDPSQAP…TIDNFTHGLA (62 aa)) lie on the Lumenal side of the membrane. A helical transmembrane segment spans residues 234 to 254 (VAASFLVSKKIGLLTTMAILL). Residues 255-260 (HEIPHE) carry the XEXPHE-motif motif. Residues 255 to 276 (HEIPHEVGDFAILLRAGFDRWT) lie on the Cytoplasmic side of the membrane. Residues 277–297 (AAKLQFSTALGGLLGACFAIC) form a helical membrane-spanning segment. Residues 298 to 307 (TQSPKGVEET) are Lumenal-facing. A helical membrane pass occupies residues 308-328 (VVWTLPFTSGGFLYVALVNVL). Topologically, residues 329–340 (PDLLEEDDPWHL) are cytoplasmic. A helical transmembrane segment spans residues 341 to 361 (NPPLPTGTPCSRCCCSAPVSW).

Belongs to the ZIP transporter (TC 2.A.5) family. Homodimer.

The protein localises to the golgi apparatus membrane. It is found in the cytoplasmic vesicle membrane. Its subcellular location is the endoplasmic reticulum membrane. The catalysed reaction is Zn(2+)(in) = Zn(2+)(out). Functionally, functions as a zinc transporter transporting Zn(2+) from the Golgi apparatus to the cytosol and thus influences the zinc level at least in areas of the cytosol. May regulate beige adipocyte differentiation. The protein is Zinc transporter ZIP13 of Rattus norvegicus (Rat).